A 34-amino-acid chain; its full sequence is uncharacterized protein (34 aa).

The chain crosses the membrane as a helical span at residues 10-30; it reads LIITSSFFAIAAVLVLSVLLI.

Its subcellular location is the membrane. This is an uncharacterized protein from Escherichia coli O6:H1 (strain CFT073 / ATCC 700928 / UPEC).